A 366-amino-acid chain; its full sequence is GTP cyclohydrolase 1 type 2 homolog (366 aa).

A divalent metal cation is bound by residues His64, His65, Asp102, His326, and Glu329.

This sequence belongs to the GTP cyclohydrolase I type 2/NIF3 family. In terms of assembly, homohexamer.

This chain is GTP cyclohydrolase 1 type 2 homolog, found in Staphylococcus epidermidis (strain ATCC 35984 / DSM 28319 / BCRC 17069 / CCUG 31568 / BM 3577 / RP62A).